An 89-amino-acid polypeptide reads, in one-letter code: Small ribosomal subunit protein uS15 (89 aa).

This sequence belongs to the universal ribosomal protein uS15 family. Part of the 30S ribosomal subunit. Forms a bridge to the 50S subunit in the 70S ribosome, contacting the 23S rRNA.

In terms of biological role, one of the primary rRNA binding proteins, it binds directly to 16S rRNA where it helps nucleate assembly of the platform of the 30S subunit by binding and bridging several RNA helices of the 16S rRNA. Forms an intersubunit bridge (bridge B4) with the 23S rRNA of the 50S subunit in the ribosome. This chain is Small ribosomal subunit protein uS15, found in Desulforapulum autotrophicum (strain ATCC 43914 / DSM 3382 / VKM B-1955 / HRM2) (Desulfobacterium autotrophicum).